The primary structure comprises 206 residues: Thiamine-phosphate synthase (206 aa).

4-amino-2-methyl-5-(diphosphooxymethyl)pyrimidine contacts are provided by residues 35-39 and asparagine 67; that span reads QLRDK. Aspartate 68 and aspartate 87 together coordinate Mg(2+). A 4-amino-2-methyl-5-(diphosphooxymethyl)pyrimidine-binding site is contributed by serine 106. 132–134 contacts 2-[(2R,5Z)-2-carboxy-4-methylthiazol-5(2H)-ylidene]ethyl phosphate; sequence TGT. A 4-amino-2-methyl-5-(diphosphooxymethyl)pyrimidine-binding site is contributed by lysine 135. Residues glycine 163 and 183-184 each bind 2-[(2R,5Z)-2-carboxy-4-methylthiazol-5(2H)-ylidene]ethyl phosphate; that span reads IS.

The protein belongs to the thiamine-phosphate synthase family. Mg(2+) is required as a cofactor.

The enzyme catalyses 2-[(2R,5Z)-2-carboxy-4-methylthiazol-5(2H)-ylidene]ethyl phosphate + 4-amino-2-methyl-5-(diphosphooxymethyl)pyrimidine + 2 H(+) = thiamine phosphate + CO2 + diphosphate. It carries out the reaction 2-(2-carboxy-4-methylthiazol-5-yl)ethyl phosphate + 4-amino-2-methyl-5-(diphosphooxymethyl)pyrimidine + 2 H(+) = thiamine phosphate + CO2 + diphosphate. It catalyses the reaction 4-methyl-5-(2-phosphooxyethyl)-thiazole + 4-amino-2-methyl-5-(diphosphooxymethyl)pyrimidine + H(+) = thiamine phosphate + diphosphate. Its pathway is cofactor biosynthesis; thiamine diphosphate biosynthesis; thiamine phosphate from 4-amino-2-methyl-5-diphosphomethylpyrimidine and 4-methyl-5-(2-phosphoethyl)-thiazole: step 1/1. Functionally, condenses 4-methyl-5-(beta-hydroxyethyl)thiazole monophosphate (THZ-P) and 2-methyl-4-amino-5-hydroxymethyl pyrimidine pyrophosphate (HMP-PP) to form thiamine monophosphate (TMP). The chain is Thiamine-phosphate synthase from Methanospirillum hungatei JF-1 (strain ATCC 27890 / DSM 864 / NBRC 100397 / JF-1).